The primary structure comprises 277 residues: Collectin-10 (277 aa).

Residues 1–27 (MSRKKEQQLRKYGTLVVLFIFQVQIFG) form the signal peptide. The tract at residues 41–82 (THTILPGPKGDDGEKGDRGEVGKQGKVGPKGPKGNKGTVGDV) is disordered. The segment covering 49-63 (KGDDGEKGDRGEVGK) has biased composition (basic and acidic residues). The Collagen-like domain maps to 56 to 115 (GDRGEVGKQGKVGPKGPKGNKGTVGDVGDQGMLGKIGPIGGKGDKGAKGISGVSGKKGKA). Residues 64–79 (QGKVGPKGPKGNKGTV) are compositionally biased toward low complexity. Residues 155-271 (TDEKFYYIVK…CQVTIYFICE (117 aa)) enclose the C-type lectin domain. Disulfide bonds link cysteine 176-cysteine 270 and cysteine 248-cysteine 262. Asparagine 258 carries N-linked (GlcNAc...) asparagine glycosylation.

This sequence belongs to the COLEC10/COLEC11 family. In terms of tissue distribution, widely expressed. Highly expressed in lung. Weakly expressed in larynx, syrinx and cranial air sac. Expressed throughout the lower gastrointestinal tract in increasing levels starting from a faint signal in duodenum and ending with relatively high signals in proctodeum, coprodeum and urodeum. In the upper part of the gastrointestinal tract, expressed in tongue, crop, and mucosa of the crop.

The protein localises to the secreted. The protein resides in the golgi apparatus. It localises to the cytoplasm. Its function is as follows. Lectin that binds to various sugars: galactose &gt; mannose = fucose &gt; N-acetylglucosamine &gt; N-acetylgalactosamine. Acts as a chemoattractant, probably involved in the regulation of cell migration. This chain is Collectin-10 (COLEC10), found in Gallus gallus (Chicken).